Here is a 462-residue protein sequence, read N- to C-terminus: tRNA(Ile)-lysidine synthase (462 aa).

26-31 is a binding site for ATP; that stretch reads SGGVDS.

This sequence belongs to the tRNA(Ile)-lysidine synthase family.

The protein localises to the cytoplasm. It carries out the reaction cytidine(34) in tRNA(Ile2) + L-lysine + ATP = lysidine(34) in tRNA(Ile2) + AMP + diphosphate + H(+). Functionally, ligates lysine onto the cytidine present at position 34 of the AUA codon-specific tRNA(Ile) that contains the anticodon CAU, in an ATP-dependent manner. Cytidine is converted to lysidine, thus changing the amino acid specificity of the tRNA from methionine to isoleucine. The polypeptide is tRNA(Ile)-lysidine synthase (Enterococcus faecalis (strain ATCC 700802 / V583)).